Here is a 224-residue protein sequence, read N- to C-terminus: Putative gastrointestinal growth factor xP4 (224 aa).

An N-terminal signal peptide occupies residues 1 to 17 (MANSVFWAIAVALVLGA). 4 P-type domains span residues 25-68 (YRCG…YTPW), 73-117 (TICN…YQPI), 123-167 (RDCS…FKPE), and 173-216 (LQCA…FYPD). 12 disulfides stabilise this stretch: Cys-27/Cys-53, Cys-37/Cys-52, Cys-47/Cys-64, Cys-75/Cys-102, Cys-86/Cys-101, Cys-96/Cys-113, Cys-125/Cys-152, Cys-136/Cys-151, Cys-146/Cys-163, Cys-175/Cys-201, Cys-185/Cys-200, and Cys-195/Cys-212. Asn-104 carries N-linked (GlcNAc...) asparagine glycosylation.

Glycosylated. Stomach mucosa.

The protein resides in the secreted. May act as a growth factor. This Xenopus laevis (African clawed frog) protein is Putative gastrointestinal growth factor xP4 (p4).